The sequence spans 486 residues: tRNA sulfurtransferase (486 aa).

The region spanning 61–165 (AILIDVLGRI…NDHMMLIKAR (105 aa)) is the THUMP domain. ATP-binding positions include 183–184 (LI), lysine 265, glycine 287, and glutamine 296. An intrachain disulfide couples cysteine 344 to cysteine 456. Residues 404 to 481 (LSANDVILDI…NGFANVRVFA (78 aa)) form the Rhodanese domain. Catalysis depends on cysteine 456, which acts as the Cysteine persulfide intermediate.

It belongs to the ThiI family.

Its subcellular location is the cytoplasm. The enzyme catalyses [ThiI sulfur-carrier protein]-S-sulfanyl-L-cysteine + a uridine in tRNA + 2 reduced [2Fe-2S]-[ferredoxin] + ATP + H(+) = [ThiI sulfur-carrier protein]-L-cysteine + a 4-thiouridine in tRNA + 2 oxidized [2Fe-2S]-[ferredoxin] + AMP + diphosphate. It carries out the reaction [ThiS sulfur-carrier protein]-C-terminal Gly-Gly-AMP + S-sulfanyl-L-cysteinyl-[cysteine desulfurase] + AH2 = [ThiS sulfur-carrier protein]-C-terminal-Gly-aminoethanethioate + L-cysteinyl-[cysteine desulfurase] + A + AMP + 2 H(+). Its pathway is cofactor biosynthesis; thiamine diphosphate biosynthesis. Its function is as follows. Catalyzes the ATP-dependent transfer of a sulfur to tRNA to produce 4-thiouridine in position 8 of tRNAs, which functions as a near-UV photosensor. Also catalyzes the transfer of sulfur to the sulfur carrier protein ThiS, forming ThiS-thiocarboxylate. This is a step in the synthesis of thiazole, in the thiamine biosynthesis pathway. The sulfur is donated as persulfide by IscS. In Mannheimia succiniciproducens (strain KCTC 0769BP / MBEL55E), this protein is tRNA sulfurtransferase.